A 229-amino-acid polypeptide reads, in one-letter code: ADP-ribosylation factor-like protein 6-interacting protein 4 (229 aa).

Positions 1-20 (MAHVGSRKRSRSRSRSRSGR) are enriched in basic residues. The interval 1-152 (MAHVGSRKRS…EDNDGPVLTD (152 aa)) is disordered. Basic and acidic residues predominate over residues 21 to 35 (RGSEKRSKRSSKDAS). Residues 66–87 (SRSSSTSSSSSSSSSASSSSSS) are compositionally biased toward low complexity. Basic residues predominate over residues 90–117 (RKKRAKHKEKKRKKKKKKRKKKLKKRVK). Phosphoserine is present on residues Ser140 and Ser174. Lys191 is covalently cross-linked (Glycyl lysine isopeptide (Lys-Gly) (interchain with G-Cter in SUMO2)).

Belongs to the ARL6IP4 family. Interacts with ZCCHC17. Interacts with SRSF2. Interacts with ARL6. In terms of tissue distribution, widely expressed. Expressed at high level in testis and thymus.

Its subcellular location is the nucleus. The protein resides in the nucleolus. It is found in the nucleus speckle. Involved in modulating alternative pre-mRNA splicing with either 5' distal site activation or preferential use of 3' proximal site. The sequence is that of ADP-ribosylation factor-like protein 6-interacting protein 4 (Arl6ip4) from Mus musculus (Mouse).